Consider the following 196-residue polypeptide: Protein Flattop (196 aa).

A disordered region spans residues 107-196; the sequence is NGLRPEIFGK…PHAGRNLAEV (90 aa). Positions 113 to 124 are enriched in basic and acidic residues; it reads IFGKPHDPDSQK. A compositionally biased stretch (low complexity) spans 137–149; the sequence is APSPTIIPSSPAS. The segment covering 150 to 162 has biased composition (polar residues); it reads NLSSPDQLQSSHP.

The protein belongs to the Flattop family. Microtubule inner protein component of sperm flagellar doublet microtubules. Interacts with DLG3. As to expression, expressed in trachea multiciliated cells.

The protein resides in the cytoplasm. It is found in the cytoskeleton. It localises to the cilium basal body. Its subcellular location is the cell projection. The protein localises to the cilium. The protein resides in the apical cell membrane. It is found in the cilium axoneme. It localises to the flagellum axoneme. Microtubule inner protein (MIP) part of the dynein-decorated doublet microtubules (DMTs) in cilia axoneme. Acts as a regulator of cilium basal body docking and positioning in mono- and multiciliated cells. Regulates basal body docking and cilia formation in multiciliated lung cells. Regulates kinocilium positioning and stereocilia bundle morphogenesis in the inner ear. This chain is Protein Flattop, found in Bos taurus (Bovine).